Consider the following 204-residue polypeptide: Fluoride-specific ion channel FluC 3 (204 aa).

Residues 1–16 show a composition bias toward basic and acidic residues; the sequence is MRADESGPERESREPT. The segment at 1–53 is disordered; sequence MRADESGPERESREPTHIPGAEPELGGEPTPRGEPGPGFEPGPGGEPAPSRAP. Residues 32-46 show a composition bias toward pro residues; it reads RGEPGPGFEPGPGGE. 4 helical membrane-spanning segments follow: residues 62–82, 96–116, 125–145, and 158–178; these read VLAA…ALGL, FAVN…VLEI, PFAA…MVDT, and AFNV…GLAI. Residues Gly133 and Thr136 each contribute to the Na(+) site.

This sequence belongs to the fluoride channel Fluc/FEX (TC 1.A.43) family.

It localises to the cell membrane. It catalyses the reaction fluoride(in) = fluoride(out). Its activity is regulated as follows. Na(+) is not transported, but it plays an essential structural role and its presence is essential for fluoride channel function. Functionally, fluoride-specific ion channel. Important for reducing fluoride concentration in the cell, thus reducing its toxicity. This Streptomyces avermitilis (strain ATCC 31267 / DSM 46492 / JCM 5070 / NBRC 14893 / NCIMB 12804 / NRRL 8165 / MA-4680) protein is Fluoride-specific ion channel FluC 3.